A 470-amino-acid polypeptide reads, in one-letter code: Flavin-containing monooxygenase FMO GS-OX-like 6 (470 aa).

17–22 (GAGAAG) serves as a coordination point for FAD. An NADP(+)-binding site is contributed by 214–219 (GYQSSG).

The protein belongs to the FMO family. FAD is required as a cofactor.

Its function is as follows. Catalyzes the conversion of methylthioalkyl glucosinolates of any chain length into methylsulfinylalkyl glucosinolates. This is Flavin-containing monooxygenase FMO GS-OX-like 6 from Arabidopsis thaliana (Mouse-ear cress).